A 902-amino-acid polypeptide reads, in one-letter code: Translation initiation factor IF-2 (902 aa).

Basic and acidic residues predominate over residues 137-177; sequence NLDEQQRLAESDRARDEAIQRKRDEEQAAKDRVEAERKAAE. Disordered regions lie at residues 137-248 and 266-314; these read NLDE…SHVM and HLSA…ERPT. Low complexity-rich tracts occupy residues 178–229 and 279–291; these read EAAA…ATPA and RGKP…SSSS. In terms of domain architecture, tr-type G spans 401–570; that stretch reads SRPPVVTIMG…SLQAEVLELK (170 aa). A G1 region spans residues 410–417; the sequence is GHVDHGKT. 410-417 lines the GTP pocket; the sequence is GHVDHGKT. The G2 stretch occupies residues 435-439; it reads GITQH. The interval 456 to 459 is G3; that stretch reads DTPG. GTP contacts are provided by residues 456 to 460 and 510 to 513; these read DTPGH and NKID. Residues 510-513 form a G4 region; it reads NKID. A G5 region spans residues 546 to 548; the sequence is SAK.

It belongs to the TRAFAC class translation factor GTPase superfamily. Classic translation factor GTPase family. IF-2 subfamily.

Its subcellular location is the cytoplasm. Functionally, one of the essential components for the initiation of protein synthesis. Protects formylmethionyl-tRNA from spontaneous hydrolysis and promotes its binding to the 30S ribosomal subunits. Also involved in the hydrolysis of GTP during the formation of the 70S ribosomal complex. The polypeptide is Translation initiation factor IF-2 (Xanthomonas campestris pv. campestris (strain 8004)).